Here is a 155-residue protein sequence, read N- to C-terminus: SsrA-binding protein (155 aa).

The protein belongs to the SmpB family.

The protein localises to the cytoplasm. Functionally, required for rescue of stalled ribosomes mediated by trans-translation. Binds to transfer-messenger RNA (tmRNA), required for stable association of tmRNA with ribosomes. tmRNA and SmpB together mimic tRNA shape, replacing the anticodon stem-loop with SmpB. tmRNA is encoded by the ssrA gene; the 2 termini fold to resemble tRNA(Ala) and it encodes a 'tag peptide', a short internal open reading frame. During trans-translation Ala-aminoacylated tmRNA acts like a tRNA, entering the A-site of stalled ribosomes, displacing the stalled mRNA. The ribosome then switches to translate the ORF on the tmRNA; the nascent peptide is terminated with the 'tag peptide' encoded by the tmRNA and targeted for degradation. The ribosome is freed to recommence translation, which seems to be the essential function of trans-translation. This is SsrA-binding protein from Helicobacter hepaticus (strain ATCC 51449 / 3B1).